The following is a 32-amino-acid chain: Photosystem II reaction center protein T (32 aa).

The helical transmembrane segment at 3 to 23 threads the bilayer; it reads SIAYVLIFACLIGLFFFAIFF.

Belongs to the PsbT family. In terms of assembly, PSII is composed of 1 copy each of membrane proteins PsbA, PsbB, PsbC, PsbD, PsbE, PsbF, PsbH, PsbI, PsbJ, PsbK, PsbL, PsbM, PsbT, PsbX, PsbY, PsbZ, Psb30/Ycf12, peripheral proteins PsbO, CyanoQ (PsbQ), PsbU, PsbV and a large number of cofactors. It forms dimeric complexes.

It localises to the cellular thylakoid membrane. In terms of biological role, found at the monomer-monomer interface of the photosystem II (PS II) dimer, plays a role in assembly and dimerization of PSII. PSII is a light-driven water plastoquinone oxidoreductase, using light energy to abstract electrons from H(2)O, generating a proton gradient subsequently used for ATP formation. This is Photosystem II reaction center protein T from Cyanothece sp. (strain PCC 7425 / ATCC 29141).